The primary structure comprises 103 residues: N(4)-acetylcytidine amidohydrolase (103 aa).

The region spanning 6 to 101 (ITFFQRFQDD…QIQFYVIEFK (96 aa)) is the ASCH domain. Lys-21 serves as the catalytic Proton acceptor. Thr-24 acts as the Nucleophile in catalysis. Glu-74 (proton donor) is an active-site residue.

The protein belongs to the N(4)-acetylcytidine amidohydrolase family.

The enzyme catalyses N(4)-acetylcytidine + H2O = cytidine + acetate + H(+). It catalyses the reaction N(4)-acetyl-2'-deoxycytidine + H2O = 2'-deoxycytidine + acetate + H(+). It carries out the reaction N(4)-acetylcytosine + H2O = cytosine + acetate + H(+). Catalyzes the hydrolysis of N(4)-acetylcytidine (ac4C). This is N(4)-acetylcytidine amidohydrolase (yqfB) from Escherichia coli (strain SMS-3-5 / SECEC).